A 161-amino-acid chain; its full sequence is ATP synthase subunit b 1 (161 aa).

The helical transmembrane segment at 3 to 23 (LDATFYALVGLILFFVLIAYL) threads the bilayer.

This sequence belongs to the ATPase B chain family. F-type ATPases have 2 components, F(1) - the catalytic core - and F(0) - the membrane proton channel. F(1) has five subunits: alpha(3), beta(3), gamma(1), delta(1), epsilon(1). F(0) has three main subunits: a(1), b(2) and c(10-14). The alpha and beta chains form an alternating ring which encloses part of the gamma chain. F(1) is attached to F(0) by a central stalk formed by the gamma and epsilon chains, while a peripheral stalk is formed by the delta and b chains.

Its subcellular location is the cell inner membrane. Its function is as follows. F(1)F(0) ATP synthase produces ATP from ADP in the presence of a proton or sodium gradient. F-type ATPases consist of two structural domains, F(1) containing the extramembraneous catalytic core and F(0) containing the membrane proton channel, linked together by a central stalk and a peripheral stalk. During catalysis, ATP synthesis in the catalytic domain of F(1) is coupled via a rotary mechanism of the central stalk subunits to proton translocation. In terms of biological role, component of the F(0) channel, it forms part of the peripheral stalk, linking F(1) to F(0). The chain is ATP synthase subunit b 1 from Sinorhizobium medicae (strain WSM419) (Ensifer medicae).